Consider the following 312-residue polypeptide: Ribosomal RNA small subunit methyltransferase H (312 aa).

S-adenosyl-L-methionine contacts are provided by residues 35-37, Asp55, Phe79, Asp100, and Gln107; that span reads GGH.

It belongs to the methyltransferase superfamily. RsmH family.

Its subcellular location is the cytoplasm. It carries out the reaction cytidine(1402) in 16S rRNA + S-adenosyl-L-methionine = N(4)-methylcytidine(1402) in 16S rRNA + S-adenosyl-L-homocysteine + H(+). Functionally, specifically methylates the N4 position of cytidine in position 1402 (C1402) of 16S rRNA. This is Ribosomal RNA small subunit methyltransferase H from Azoarcus sp. (strain BH72).